Reading from the N-terminus, the 395-residue chain is Elongation factor Tu (395 aa).

Positions 10–204 constitute a tr-type G domain; the sequence is LPHVNIGTIG…AVDEYIPTPQ (195 aa). Residues 19–26 form a G1 region; that stretch reads GHVDHGKT. 19-26 contacts GTP; sequence GHVDHGKT. Threonine 26 provides a ligand contact to Mg(2+). The segment at 60–64 is G2; that stretch reads GITIN. The G3 stretch occupies residues 81–84; it reads DCPG. GTP is bound by residues 81–85 and 136–139; these read DCPGH and NKCD. Residues 136 to 139 form a G4 region; the sequence is NKCD. The tract at residues 174–176 is G5; sequence SAL.

The protein belongs to the TRAFAC class translation factor GTPase superfamily. Classic translation factor GTPase family. EF-Tu/EF-1A subfamily. As to quaternary structure, monomer.

It localises to the cytoplasm. It catalyses the reaction GTP + H2O = GDP + phosphate + H(+). In terms of biological role, GTP hydrolase that promotes the GTP-dependent binding of aminoacyl-tRNA to the A-site of ribosomes during protein biosynthesis. This Mycoplasma capricolum subsp. capricolum (strain California kid / ATCC 27343 / NCTC 10154) protein is Elongation factor Tu.